The following is a 251-amino-acid chain: Triosephosphate isomerase (251 aa).

9–11 serves as a coordination point for substrate; it reads NWK. The active-site Electrophile is the histidine 95. Glutamate 167 functions as the Proton acceptor in the catalytic mechanism. Substrate-binding positions include glycine 173, serine 213, and 234–235; that span reads GG.

It belongs to the triosephosphate isomerase family. In terms of assembly, homodimer.

It localises to the cytoplasm. It catalyses the reaction D-glyceraldehyde 3-phosphate = dihydroxyacetone phosphate. Its pathway is carbohydrate biosynthesis; gluconeogenesis. The protein operates within carbohydrate degradation; glycolysis; D-glyceraldehyde 3-phosphate from glycerone phosphate: step 1/1. Functionally, involved in the gluconeogenesis. Catalyzes stereospecifically the conversion of dihydroxyacetone phosphate (DHAP) to D-glyceraldehyde-3-phosphate (G3P). The sequence is that of Triosephosphate isomerase from Latilactobacillus sakei subsp. sakei (strain 23K) (Lactobacillus sakei subsp. sakei).